We begin with the raw amino-acid sequence, 311 residues long: Methionyl-tRNA formyltransferase (311 aa).

Ser-109 to Pro-112 provides a ligand contact to (6S)-5,6,7,8-tetrahydrofolate.

Belongs to the Fmt family.

The enzyme catalyses L-methionyl-tRNA(fMet) + (6R)-10-formyltetrahydrofolate = N-formyl-L-methionyl-tRNA(fMet) + (6S)-5,6,7,8-tetrahydrofolate + H(+). In terms of biological role, attaches a formyl group to the free amino group of methionyl-tRNA(fMet). The formyl group appears to play a dual role in the initiator identity of N-formylmethionyl-tRNA by promoting its recognition by IF2 and preventing the misappropriation of this tRNA by the elongation apparatus. This chain is Methionyl-tRNA formyltransferase, found in Staphylococcus aureus (strain USA300).